A 362-amino-acid polypeptide reads, in one-letter code: MTGKKSSREKRRKRSGQEAAAALAAPDLVPAVGGSGSGSTSGCGSASGCGSVTCCGNTSVSGSVTGGGSGGSCWGGSSVERGERRKRRSTDSSSSVSGSLQQEAKYLLPPLEKELFLAEHSDLEEGGLDLTVALKPVSFYISDKKEMLRQCFCIIGEKKLQKMLPDVLKNCSIEEIKRLCQEQLELLSEKKILKILEGDNGMDSEMEEEADDGSKMVSDVVNQQDSCVDSTSSLRENKQPEGLELKQGKGEDSDVLSINADAYDSDIEGPCNEEAAAPEVPENTVQSEAGQIDDLEKDIEKSVNEILGLAESSPKEPKAATLTVPPPEDVQPSAQQLELLELEMRARAIKALMKAGDIKKPA.

The segment covering 1–14 has biased composition (basic residues); that stretch reads MTGKKSSREKRRKR. Disordered stretches follow at residues 1–44 and 65–101; these read MTGK…SGCG and TGGGSGGSCWGGSSVERGERRKRRSTDSSSSVSGSLQ. Over residues 19–32 the composition is skewed to low complexity; that stretch reads AAAALAAPDLVPAV. Composition is skewed to gly residues over residues 33–44 and 65–74; these read GGSGSGSTSGCG and TGGGSGGSCW. S89 bears the Phosphoserine mark. Residue T90 is modified to Phosphothreonine. K105 participates in a covalent cross-link: Glycyl lysine isopeptide (Lys-Gly) (interchain with G-Cter in SUMO2). S121 and S204 each carry phosphoserine. Disordered stretches follow at residues 226-251, 269-291, and 309-332; these read SCVDSTSSLRENKQPEGLELKQGKGE, GPCNEEAAAPEVPENTVQSEAGQ, and LAESSPKEPKAATLTVPPPEDVQP. A compositionally biased stretch (basic and acidic residues) spans 235–251; sequence RENKQPEGLELKQGKGE. Positions 273–282 are enriched in low complexity; it reads EEAAAPEVPE. Positions 282–312 form a coiled coil; sequence ENTVQSEAGQIDDLEKDIEKSVNEILGLAES. S313 is modified (phosphoserine).

Its function is as follows. Anti-apoptotic protein that modulates a caspase-10 dependent mitochondrial caspase-3/9 feedback amplification loop. This Bos taurus (Bovine) protein is Caspase activity and apoptosis inhibitor 1 (CAAP1).